Reading from the N-terminus, the 898-residue chain is DNA gyrase subunit A (898 aa).

Disordered regions lie at residues 1-22 and 36-56; these read MSDD…DDDS and EEEK…EKEG. Residues 97–562 enclose the Topo IIA-type catalytic domain; the sequence is LPDARDGLKP…VMSSINNEDL (466 aa). Tyr185 functions as the O-(5'-phospho-DNA)-tyrosine intermediate in the catalytic mechanism. The GyrA-box signature appears at 589–595; sequence QRRGGVG.

The protein belongs to the type II topoisomerase GyrA/ParC subunit family. In terms of assembly, heterotetramer, composed of two GyrA and two GyrB chains. In the heterotetramer, GyrA contains the active site tyrosine that forms a transient covalent intermediate with DNA, while GyrB binds cofactors and catalyzes ATP hydrolysis.

The protein localises to the cytoplasm. It catalyses the reaction ATP-dependent breakage, passage and rejoining of double-stranded DNA.. Functionally, a type II topoisomerase that negatively supercoils closed circular double-stranded (ds) DNA in an ATP-dependent manner to modulate DNA topology and maintain chromosomes in an underwound state. Negative supercoiling favors strand separation, and DNA replication, transcription, recombination and repair, all of which involve strand separation. Also able to catalyze the interconversion of other topological isomers of dsDNA rings, including catenanes and knotted rings. Type II topoisomerases break and join 2 DNA strands simultaneously in an ATP-dependent manner. This chain is DNA gyrase subunit A, found in Metamycoplasma arthritidis (strain 158L3-1) (Mycoplasma arthritidis).